A 269-amino-acid polypeptide reads, in one-letter code: Cytochrome c oxidase subunit 3 (269 aa).

Transmembrane regions (helical) follow at residues 24-44 (FYNSLSLFILTTSGVLTMHGF), 46-66 (NMYIILFIAFINLVWCMTLWF), 90-110 (GVGLFIASEALFFLAIFWTFF), 132-152 (IDPFELPLLNNIILLSSGVTV), 167-187 (ALYGLVATILLAIVFTIFQGI), 207-227 (FSTGFHGFHVLIGTAFLSVGL), and 247-267 (ILYWHFVDVVWLILYVCIYFW).

This sequence belongs to the cytochrome c oxidase subunit 3 family. As to quaternary structure, component of the cytochrome c oxidase (complex IV, CIV), a multisubunit enzyme composed of a catalytic core of 3 subunits and several supernumerary subunits. The complex exists as a monomer or a dimer and forms supercomplexes (SCs) in the inner mitochondrial membrane with ubiquinol-cytochrome c oxidoreductase (cytochrome b-c1 complex, complex III, CIII).

It is found in the mitochondrion inner membrane. The enzyme catalyses 4 Fe(II)-[cytochrome c] + O2 + 8 H(+)(in) = 4 Fe(III)-[cytochrome c] + 2 H2O + 4 H(+)(out). Functionally, component of the cytochrome c oxidase, the last enzyme in the mitochondrial electron transport chain which drives oxidative phosphorylation. The respiratory chain contains 3 multisubunit complexes succinate dehydrogenase (complex II, CII), ubiquinol-cytochrome c oxidoreductase (cytochrome b-c1 complex, complex III, CIII) and cytochrome c oxidase (complex IV, CIV), that cooperate to transfer electrons derived from NADH and succinate to molecular oxygen, creating an electrochemical gradient over the inner membrane that drives transmembrane transport and the ATP synthase. Cytochrome c oxidase is the component of the respiratory chain that catalyzes the reduction of oxygen to water. Electrons originating from reduced cytochrome c in the intermembrane space (IMS) are transferred via the dinuclear copper A center (CU(A)) of subunit 2 and heme A of subunit 1 to the active site in subunit 1, a binuclear center (BNC) formed by heme A3 and copper B (CU(B)). The BNC reduces molecular oxygen to 2 water molecules using 4 electrons from cytochrome c in the IMS and 4 protons from the mitochondrial matrix. In Trichophyton rubrum (Athlete's foot fungus), this protein is Cytochrome c oxidase subunit 3 (COXIII).